Consider the following 508-residue polypeptide: Tyrosine decarboxylase 4 (508 aa).

An N6-(pyridoxal phosphate)lysine modification is found at Lys318.

It belongs to the group II decarboxylase family. Homodimer. Pyridoxal 5'-phosphate serves as cofactor.

The enzyme catalyses L-tyrosine + H(+) = tyramine + CO2. The polypeptide is Tyrosine decarboxylase 4 (TYRDC-4) (Petroselinum crispum (Parsley)).